Here is a 660-residue protein sequence, read N- to C-terminus: Methionine--tRNA ligase (660 aa).

The 'HIGH' region motif lies at 11 to 21 (PYANGPCHLGH). Residues C143, C146, C155, and C158 each coordinate Zn(2+). The short motif at 325–329 (KMSTS) is the 'KMSKS' region element. Residue T328 participates in ATP binding. Residues 563-660 (DFDKVVIKIG…DECEVGERIQ (98 aa)) form the tRNA-binding domain.

It belongs to the class-I aminoacyl-tRNA synthetase family. MetG type 1 subfamily. As to quaternary structure, homodimer. The cofactor is Zn(2+).

It localises to the cytoplasm. It catalyses the reaction tRNA(Met) + L-methionine + ATP = L-methionyl-tRNA(Met) + AMP + diphosphate. Functionally, is required not only for elongation of protein synthesis but also for the initiation of all mRNA translation through initiator tRNA(fMet) aminoacylation. This chain is Methionine--tRNA ligase, found in Methanobrevibacter smithii (strain ATCC 35061 / DSM 861 / OCM 144 / PS).